We begin with the raw amino-acid sequence, 368 residues long: MSETAKKVIVGMSGGVDSSVSAWLLQQQGYQVEGLFMKNWEEDDGEEYCTAAADLADAQAVCDKLGIELHTVNFAAEYWNNVFELFLAEYKAGRTPNPDILCNKEIKFKAFLEFAAEDLGADYIATGHYVRRADVDGKSRLLRGLDSNKDQSYFLYTLSHEQIAQSLFPVGELEKPQVRKIAEDLGLVTAKKKDSTGICFIGERKFREFLGRYLPAQPGKIITVDGDEIGEHQGLMYHTLGQRKGLGIGGTKEGTEEPWYVVDKDVENNILVVAQGHEHPRLMSVGLIAQQLHWVDREPFTGTMRCTVKTRYRQTDIPCTVKALDDDRIEVIFDEPVAAVTPGQSAVFYNGEVCLGGGIIEQRLPLPV.

ATP is bound by residues 11–18 (GMSGGVDS) and methionine 37. The interaction with target base in tRNA stretch occupies residues 97 to 99 (NPD). Cysteine 102 (nucleophile) is an active-site residue. A disulfide bond links cysteine 102 and cysteine 199. An ATP-binding site is contributed by glycine 127. The interval 149–151 (KDQ) is interaction with tRNA. The Cysteine persulfide intermediate role is filled by cysteine 199. The interaction with tRNA stretch occupies residues 311–312 (RY).

The protein belongs to the MnmA/TRMU family. In terms of assembly, interacts with TusE.

The protein resides in the cytoplasm. The catalysed reaction is S-sulfanyl-L-cysteinyl-[protein] + uridine(34) in tRNA + AH2 + ATP = 2-thiouridine(34) in tRNA + L-cysteinyl-[protein] + A + AMP + diphosphate + H(+). In terms of biological role, catalyzes the 2-thiolation of uridine at the wobble position (U34) of tRNA(Lys), tRNA(Glu) and tRNA(Gln), leading to the formation of s(2)U34, the first step of tRNA-mnm(5)s(2)U34 synthesis. Sulfur is provided by IscS, via a sulfur-relay system. Binds ATP and its substrate tRNAs. The sequence is that of tRNA-specific 2-thiouridylase MnmA from Shigella boydii serotype 18 (strain CDC 3083-94 / BS512).